Here is a 119-residue protein sequence, read N- to C-terminus: Large ribosomal subunit protein bL19 (119 aa).

The protein belongs to the bacterial ribosomal protein bL19 family.

Functionally, this protein is located at the 30S-50S ribosomal subunit interface and may play a role in the structure and function of the aminoacyl-tRNA binding site. This Pseudoalteromonas translucida (strain TAC 125) protein is Large ribosomal subunit protein bL19.